We begin with the raw amino-acid sequence, 96 residues long: Co-chaperonin GroES (96 aa).

The protein belongs to the GroES chaperonin family. Heptamer of 7 subunits arranged in a ring. Interacts with the chaperonin GroEL.

It localises to the cytoplasm. In terms of biological role, together with the chaperonin GroEL, plays an essential role in assisting protein folding. The GroEL-GroES system forms a nano-cage that allows encapsulation of the non-native substrate proteins and provides a physical environment optimized to promote and accelerate protein folding. GroES binds to the apical surface of the GroEL ring, thereby capping the opening of the GroEL channel. This chain is Co-chaperonin GroES, found in Cupriavidus taiwanensis (strain DSM 17343 / BCRC 17206 / CCUG 44338 / CIP 107171 / LMG 19424 / R1) (Ralstonia taiwanensis (strain LMG 19424)).